A 352-amino-acid polypeptide reads, in one-letter code: Coproporphyrin III ferrochelatase (352 aa).

Fe-coproporphyrin III contacts are provided by serine 52 and tyrosine 121. Positions 181 and 269 each coordinate Fe(2+).

This sequence belongs to the ferrochelatase family.

The protein resides in the cytoplasm. It carries out the reaction Fe-coproporphyrin III + 2 H(+) = coproporphyrin III + Fe(2+). It functions in the pathway porphyrin-containing compound metabolism; protoheme biosynthesis. Its function is as follows. Involved in coproporphyrin-dependent heme b biosynthesis. Catalyzes the insertion of ferrous iron into coproporphyrin III to form Fe-coproporphyrin III. In Nocardia farcinica (strain IFM 10152), this protein is Coproporphyrin III ferrochelatase.